A 616-amino-acid polypeptide reads, in one-letter code: Chaperone protein HscA (616 aa).

This sequence belongs to the heat shock protein 70 family.

Functionally, chaperone involved in the maturation of iron-sulfur cluster-containing proteins. Has a low intrinsic ATPase activity which is markedly stimulated by HscB. Involved in the maturation of IscU. This chain is Chaperone protein HscA, found in Edwardsiella ictaluri (strain 93-146).